A 121-amino-acid chain; its full sequence is Chronic lymphocytic leukemia up-regulated protein 1 (121 aa).

As to expression, specifically expressed in chronic lymphocytic leukemia (CLL) cells from patients without immunoglobulin heavy-chain hypermutations. Expression is detected in all CLL cells and levels are similar in patients before and after treatment.

It localises to the cytoplasm. The chain is Chronic lymphocytic leukemia up-regulated protein 1 (CLLU1) from Homo sapiens (Human).